A 272-amino-acid polypeptide reads, in one-letter code: HTH-type transcriptional repressor AllR (272 aa).

The disordered stretch occupies residues 1 to 20 (MTEVRRRGRPGQAEPTAQKG). Residues 21–83 (AQALERGIAI…SQLGWWHIGL (63 aa)) form the HTH iclR-type domain. A DNA-binding region (H-T-H motif) is located at residues 43–62 (VSDISGSLDLPLSTTFRLLK). The 170-residue stretch at 98–267 (VLSVAGPFMH…AKDISTALGL (170 aa)) folds into the IclR-ED domain. Residues 154-156 (SGA), D207, C217, and 234-236 (SIS) contribute to the glyoxylate site.

Negative regulator of allantoin and glyoxylate utilization operons. Binds to the gcl promoter and to the allS-allA intergenic region. The polypeptide is HTH-type transcriptional repressor AllR (allR) (Salmonella typhi).